A 246-amino-acid chain; its full sequence is Bacteriorhodopsin-II-like protein (246 aa).

7 helical membrane-spanning segments follow: residues 7-27 (EATWLWIGTIGMVLGTVYFAV), 45-65 (TLIPAIAAAAYLAMATGLGVI), 82-102 (YADWLLTTPLLIIDLALVAGA), 107-127 (LYKLIIIDAIMILGGLAGSMM), 135-155 (IVWWAVSTAAFIILLYYLLGE), 182-202 (WALYPIVWILGTGGGFGIIAV), and 205-225 (EIMLYVMLDIGTKIGFGAVLL). An N6-(retinylidene)lysine modification is found at lysine 217.

This sequence belongs to the archaeal/bacterial/fungal opsin family. The covalent binding of retinal to the apoprotein, bacterioopsin, generates bacteriorhodopsin.

Its subcellular location is the cell membrane. Has no proton-pumping activity but is potentially capable of functioning as a sensory SRII-like protein. The chromophore contains 36.5% all-trans-, 7.6% 11-cis- and 56.4% 13-cis-retinal in the dark and 30.1% 11-cis- and 47.7% 13-cis-retinal upon illumination with &gt;460 nm light. The sequence is that of Bacteriorhodopsin-II-like protein (bop2) from Haloquadratum walsbyi (strain DSM 16790 / HBSQ001).